The sequence spans 725 residues: Protein ALEX (725 aa).

Disordered stretches follow at residues 1–93, 177–226, 256–340, 396–481, 508–528, 584–624, and 638–675; these read MSPS…ARAQ, GAIA…PLTD, EPPL…PSQP, PILT…SPLL, PMQV…PLGH, LPGL…AASS, and ATRS…GRPR. A compositionally biased stretch (basic residues) spans 41–51; it reads HLRRKPCHSRH. Positions 260–276 are enriched in polar residues; the sequence is GSTTTPLSIWTAPQSQV. Basic and acidic residues-rich tracts occupy residues 297-307 and 314-326; these read QLSEKQPRWKE and RWKE…REGT. Composition is skewed to pro residues over residues 423–442 and 459–473; these read PSQP…PGQP and RSLP…PRSP. 2 stretches are compositionally biased toward low complexity: residues 584–598 and 643–658; these read LPGL…AAAG and ATQS…EAAS.

It belongs to the ALEX family. As to quaternary structure, interacts with the N-terminal region of the XLas isoforms of guanine nucleotide-binding protein G(s) subunit alpha.

It is found in the cell membrane. It localises to the cell projection. The protein localises to the ruffle. May inhibit the adenylyl cyclase-stimulating activity of guanine nucleotide-binding protein G(s) subunit alpha which is produced from the same locus in a different open reading frame. This Mus musculus (Mouse) protein is Protein ALEX.